Here is a 508-residue protein sequence, read N- to C-terminus: Inosine-5'-monophosphate dehydrogenase (508 aa).

2 CBS domains span residues 111 to 170 (FITD…EITL) and 174 to 230 (MTTN…PDAS). Residues D267 and 317–319 (GMG) contribute to the NAD(+) site. Residues G319 and G321 each contribute to the K(+) site. S322 is an IMP binding site. Residue C324 coordinates K(+). C324 serves as the catalytic Thioimidate intermediate. IMP is bound by residues 357–359 (DGG), 380–381 (GF), and 404–408 (YRGMA). Catalysis depends on R420, which acts as the Proton acceptor. Residue Q432 coordinates IMP. G492 lines the K(+) pocket.

The protein belongs to the IMPDH/GMPR family. Homotetramer. K(+) is required as a cofactor.

It carries out the reaction IMP + NAD(+) + H2O = XMP + NADH + H(+). It participates in purine metabolism; XMP biosynthesis via de novo pathway; XMP from IMP: step 1/1. With respect to regulation, mycophenolic acid (MPA) is a non-competitive inhibitor that prevents formation of the closed enzyme conformation by binding to the same site as the amobile flap. In contrast, mizoribine monophosphate (MZP) is a competitive inhibitor that induces the closed conformation. MPA is a potent inhibitor of mammalian IMPDHs but a poor inhibitor of the bacterial enzymes. MZP is a more potent inhibitor of bacterial IMPDH. Catalyzes the conversion of inosine 5'-phosphate (IMP) to xanthosine 5'-phosphate (XMP), the first committed and rate-limiting step in the de novo synthesis of guanine nucleotides, and therefore plays an important role in the regulation of cell growth. The protein is Inosine-5'-monophosphate dehydrogenase of Leptospira interrogans serogroup Icterohaemorrhagiae serovar Lai (strain 56601).